Reading from the N-terminus, the 91-residue chain is Small ribosomal subunit protein uS19 (91 aa).

The protein belongs to the universal ribosomal protein uS19 family.

Protein S19 forms a complex with S13 that binds strongly to the 16S ribosomal RNA. The polypeptide is Small ribosomal subunit protein uS19 (Paraburkholderia phymatum (strain DSM 17167 / CIP 108236 / LMG 21445 / STM815) (Burkholderia phymatum)).